Here is a 141-residue protein sequence, read N- to C-terminus: Meiotically up-regulated gene 118 protein (141 aa).

The span at 106-115 (LSSQKSARQP) shows a compositional bias: polar residues. The disordered stretch occupies residues 106–141 (LSSQKSARQPTKTVASSSSSSSKSTTVSKSSSKSQV). Low complexity predominate over residues 116–141 (TKTVASSSSSSSKSTTVSKSSSKSQV).

The protein localises to the nucleus. In terms of biological role, has a role in meiosis. The polypeptide is Meiotically up-regulated gene 118 protein (mug118) (Schizosaccharomyces pombe (strain 972 / ATCC 24843) (Fission yeast)).